Here is a 319-residue protein sequence, read N- to C-terminus: D-alanine--D-alanine ligase B (319 aa).

The ATP-grasp domain occupies 117–312 (KRVWLSLGLP…FQQLVLAILA (196 aa)). An ATP-binding site is contributed by 143–198 (AQRLGFPLIVKPAHEGSSIGMAKVGGLDELIAAWREAARYDSQVLVEQWISGPEFT). Residues aspartate 266, glutamate 279, and asparagine 281 each coordinate Mg(2+).

The protein belongs to the D-alanine--D-alanine ligase family. It depends on Mg(2+) as a cofactor. Mn(2+) is required as a cofactor.

The protein localises to the cytoplasm. The catalysed reaction is 2 D-alanine + ATP = D-alanyl-D-alanine + ADP + phosphate + H(+). It participates in cell wall biogenesis; peptidoglycan biosynthesis. Its function is as follows. Cell wall formation. This chain is D-alanine--D-alanine ligase B, found in Pseudomonas aeruginosa (strain ATCC 15692 / DSM 22644 / CIP 104116 / JCM 14847 / LMG 12228 / 1C / PRS 101 / PAO1).